The chain runs to 1363 residues: Tonsoku-like protein (1363 aa).

TPR repeat units lie at residues 27 to 60 (AAYC…LESV), 67 to 100 (AVAH…AGSL), 107 to 147 (QRAW…VDEK), 162 to 195 (TRLY…AEQN), 202 to 235 (FRAR…ARAM), 242 to 275 (SECC…GSQK), 311 to 344 (MAIC…AELL), and 352 to 385 (AVIH…RKGN). Residues 460-511 (SMAKDTEEEEEEEEEEEEEASEAPETSELELSESEDDADGLSQQLEEDEELQ) are disordered. Residues 465–510 (TEEEEEEEEEEEEEASEAPETSELELSESEDDADGLSQQLEEDEEL) are compositionally biased toward acidic residues. ANK repeat units follow at residues 528–557 (MGET…PLNP), 561–590 (CGWT…AVDD), and 597–626 (DGIT…SVTL). The segment at 662–786 (ERLQMASSGQ…KSRETATSSA (125 aa)) is disordered. Positions 666-684 (MASSGQASRSSPALQTIPS) are enriched in polar residues. A compositionally biased stretch (pro residues) spans 692-713 (TSPPSSPCPEPSSYTPRPPEAS). Residues 771 to 780 (KIPDPPKSRE) show a composition bias toward basic and acidic residues. R796 is subject to Omega-N-methylarginine. Disordered stretches follow at residues 841–866 (PLTR…RTRV) and 883–909 (AGDG…KENY). Polar residues predominate over residues 842-853 (LTRSGRPSTSVS). 10 LRR repeats span residues 1060–1081 (ALRE…ELLA), 1088–1108 (NLVL…RQLV), 1119–1140 (NLEE…ALAS), 1147–1168 (MLST…SHQA), 1179–1199 (HLKT…ARVL), 1206–1214 (TLKRLDLSS), 1238–1261 (ALAH…SRCL), 1266–1287 (SLTS…EELL), 1296–1317 (GLSF…DLWD), and 1322–1343 (QLQE…SVCQ).

This sequence belongs to the Tonsoku family. As to quaternary structure, component of the MMS22L-TONSL complex, a complex at least composed of MMS22L and TONSL/NFKBIL2. Interacts with the MCM complex, the FACT complex and the RPA complex. Interacts with MCM5; the interaction is direct. Binds histones, with a strong preference for histone H3.1 (histones H3.1 and H3-4/H3.1t). Interacts (via ANK repeats) with histone H4; specifically binds histone H4 lacking methylation at 'Lys-20' (H4K20me0). May interact with DNAJC9; the interaction seems to be histone-dependent.

It localises to the nucleus. It is found in the chromosome. The protein resides in the cytoplasm. Its function is as follows. Component of the MMS22L-TONSL complex, a complex that promotes homologous recombination-mediated repair of double-strand breaks (DSBs) at stalled or collapsed replication forks. The MMS22L-TONSL complex is required to maintain genome integrity during DNA replication. It mediates the assembly of RAD51 filaments on single-stranded DNA (ssDNA): the MMS22L-TONSL complex is recruited to DSBs following histone replacement by histone chaperones and eviction of the replication protein A complex (RPA/RP-A) from DSBs. Following recruitment to DSBs, the TONSL-MMS22L complex promotes recruitment of RAD51 filaments and subsequent homologous recombination. Within the complex, TONSL acts as a histone reader, which recognizes and binds newly synthesized histones following their replacement by histone chaperones. Specifically binds histone H4 lacking methylation at 'Lys-20' (H4K20me0) and histone H3.1. The chain is Tonsoku-like protein from Mus musculus (Mouse).